The sequence spans 28 residues: uncharacterized protein (28 aa).

The protein resides in the cell inner membrane. This is an uncharacterized protein from Escherichia coli (strain K12).